Consider the following 222-residue polypeptide: Cytidylate kinase (222 aa).

11–19 is a binding site for ATP; sequence GPSGSGKST.

It belongs to the cytidylate kinase family. Type 1 subfamily.

The protein localises to the cytoplasm. The enzyme catalyses CMP + ATP = CDP + ADP. It catalyses the reaction dCMP + ATP = dCDP + ADP. The sequence is that of Cytidylate kinase from Ureaplasma urealyticum serovar 10 (strain ATCC 33699 / Western).